We begin with the raw amino-acid sequence, 417 residues long: Tyrosine--tRNA ligase (417 aa).

Residue Tyr34 coordinates L-tyrosine. Positions 39 to 48 (PTAKSIHIGN) match the 'HIGH' region motif. Residues Tyr165 and Gln169 each contribute to the L-tyrosine site. The short motif at 227–231 (KFGKS) is the 'KMSKS' region element. An ATP-binding site is contributed by Lys230. The region spanning 349–416 (TDVVELLVKD…GKKKYFLAKV (68 aa)) is the S4 RNA-binding domain.

Belongs to the class-I aminoacyl-tRNA synthetase family. TyrS type 1 subfamily. As to quaternary structure, homodimer.

It localises to the cytoplasm. The enzyme catalyses tRNA(Tyr) + L-tyrosine + ATP = L-tyrosyl-tRNA(Tyr) + AMP + diphosphate + H(+). Catalyzes the attachment of tyrosine to tRNA(Tyr) in a two-step reaction: tyrosine is first activated by ATP to form Tyr-AMP and then transferred to the acceptor end of tRNA(Tyr). The sequence is that of Tyrosine--tRNA ligase from Oenococcus oeni (strain ATCC BAA-331 / PSU-1).